Reading from the N-terminus, the 497-residue chain is Acetyl-coenzyme A carboxylase carboxyl transferase subunit beta, chloroplastic (497 aa).

One can recognise a CoA carboxyltransferase N-terminal domain in the interval 230 to 497 (LWIQCENCYG…FFPLNQNSIK (268 aa)). Zn(2+) contacts are provided by Cys-234, Cys-237, Cys-253, and Cys-256. Residues 234 to 256 (CENCYGLNYKKFFRSKMNICEQC) form a C4-type zinc finger.

It belongs to the AccD/PCCB family. In terms of assembly, acetyl-CoA carboxylase is a heterohexamer composed of biotin carboxyl carrier protein, biotin carboxylase and 2 subunits each of ACCase subunit alpha and ACCase plastid-coded subunit beta (accD). The cofactor is Zn(2+).

It localises to the plastid. Its subcellular location is the chloroplast stroma. The catalysed reaction is N(6)-carboxybiotinyl-L-lysyl-[protein] + acetyl-CoA = N(6)-biotinyl-L-lysyl-[protein] + malonyl-CoA. Its pathway is lipid metabolism; malonyl-CoA biosynthesis; malonyl-CoA from acetyl-CoA: step 1/1. Functionally, component of the acetyl coenzyme A carboxylase (ACC) complex. Biotin carboxylase (BC) catalyzes the carboxylation of biotin on its carrier protein (BCCP) and then the CO(2) group is transferred by the transcarboxylase to acetyl-CoA to form malonyl-CoA. This Platanus occidentalis (Sycamore) protein is Acetyl-coenzyme A carboxylase carboxyl transferase subunit beta, chloroplastic.